Here is a 310-residue protein sequence, read N- to C-terminus: Probable manganese-dependent inorganic pyrophosphatase (310 aa).

Mn(2+)-binding residues include His-9, Asp-13, Asp-15, Asp-76, His-98, and Asp-150.

The protein belongs to the PPase class C family. Requires Mn(2+) as cofactor.

It is found in the cytoplasm. The catalysed reaction is diphosphate + H2O = 2 phosphate + H(+). The polypeptide is Probable manganese-dependent inorganic pyrophosphatase (Streptococcus thermophilus (strain ATCC BAA-491 / LMD-9)).